The following is a 212-amino-acid chain: Uridine kinase (212 aa).

13-20 (GASASGKS) contacts ATP.

Belongs to the uridine kinase family.

The protein resides in the cytoplasm. It carries out the reaction uridine + ATP = UMP + ADP + H(+). It catalyses the reaction cytidine + ATP = CMP + ADP + H(+). It functions in the pathway pyrimidine metabolism; CTP biosynthesis via salvage pathway; CTP from cytidine: step 1/3. Its pathway is pyrimidine metabolism; UMP biosynthesis via salvage pathway; UMP from uridine: step 1/1. This is Uridine kinase from Shewanella piezotolerans (strain WP3 / JCM 13877).